Consider the following 332-residue polypeptide: uncharacterized protein (332 aa).

Acidic residues-rich tracts occupy residues Glu290–Gly314 and Glu323–Glu332. A disordered region spans residues Glu290–Glu332.

Belongs to the mimivirus L17x/L18x family.

This is an uncharacterized protein from Acanthamoeba polyphaga mimivirus (APMV).